Reading from the N-terminus, the 145-residue chain is Transcriptional regulator MraZ (145 aa).

2 SpoVT-AbrB domains span residues 5–50 and 81–124; these read TFNH…ALPQ and AHEV…DKAA.

This sequence belongs to the MraZ family. Forms oligomers.

Its subcellular location is the cytoplasm. The protein resides in the nucleoid. The polypeptide is Transcriptional regulator MraZ (Anaeromyxobacter sp. (strain Fw109-5)).